A 476-amino-acid polypeptide reads, in one-letter code: MGQLHFFFFPVMAHGHMIPTLDMAKLFASRGVKATIITTPLNEFVFSKAIQRNKHLGIEIEIRLIKFPAVENGLPEECERLDQIPSDEKLPNFFKAVAMMQEPLEQLIEECRPDCLISDMFLPWTTDTAAKFNIPRIVFHGTSFFALCVENSVRLNKPFKNVSSDSETFVVPDLPHEIKLTRTQVSPFERSGEETAMTRMIKTVRESDSKSYGVVFNSFYELETDYVEHYTKVLGRRAWAIGPLSMCNRDIEDKAERGKKSSIDKHECLKWLDSKKPSSVVYVCFGSVANFTASQLHELAMGIEASGQEFIWVVRTELDNEDWLPEGFEERTKEKGLIIRGWAPQVLILDHESVGAFVTHCGWNSTLEGVSGGVPMVTWPVFAEQFFNEKLVTEVLKTGAGVGSIQWKRSASEGVKREAIAKAIKRVMVSEEADGFRNRAKAYKEMARKAIEEGGSSYTGLTTLLEDISTYSSTGH.

The Proton acceptor role is filled by His16. His16 contacts an anthocyanidin. The active-site Charge relay is Asp119. Ala343, Gln345, His360, Trp363, Asn364, Ser365, and Glu368 together coordinate UDP-alpha-D-glucose. Ala383 contributes to the an anthocyanidin binding site. Positions 384 and 385 each coordinate UDP-alpha-D-glucose.

The protein belongs to the UDP-glycosyltransferase family.

The enzyme catalyses scopoletin + UDP-alpha-D-glucose = scopolin + UDP + H(+). Its function is as follows. Glucosyltransferase acting preferentially on aromatic substrates of the phenylpropanoid types. The best substrates are scopoletin and esculetin. Required for full resistance to virus. In Nicotiana tabacum (Common tobacco), this protein is Scopoletin glucosyltransferase (TOGT1).